A 101-amino-acid polypeptide reads, in one-letter code: Phosphoribosyl-AMP cyclohydrolase (101 aa).

Asp-71 lines the Mg(2+) pocket. Cys-72 provides a ligand contact to Zn(2+). The Mg(2+) site is built by Asp-73 and Asp-75. Residues Cys-88 and Cys-95 each coordinate Zn(2+).

The protein belongs to the PRA-CH family. As to quaternary structure, homodimer. The cofactor is Mg(2+). It depends on Zn(2+) as a cofactor.

It is found in the cytoplasm. The catalysed reaction is 1-(5-phospho-beta-D-ribosyl)-5'-AMP + H2O = 1-(5-phospho-beta-D-ribosyl)-5-[(5-phospho-beta-D-ribosylamino)methylideneamino]imidazole-4-carboxamide. Its pathway is amino-acid biosynthesis; L-histidine biosynthesis; L-histidine from 5-phospho-alpha-D-ribose 1-diphosphate: step 3/9. In terms of biological role, catalyzes the hydrolysis of the adenine ring of phosphoribosyl-AMP. The sequence is that of Phosphoribosyl-AMP cyclohydrolase from Bacillus cytotoxicus (strain DSM 22905 / CIP 110041 / 391-98 / NVH 391-98).